Reading from the N-terminus, the 306-residue chain is Pantothenate kinase (306 aa).

90–97 (GSVAVGKS) is an ATP binding site.

Belongs to the prokaryotic pantothenate kinase family.

It localises to the cytoplasm. It catalyses the reaction (R)-pantothenate + ATP = (R)-4'-phosphopantothenate + ADP + H(+). Its pathway is cofactor biosynthesis; coenzyme A biosynthesis; CoA from (R)-pantothenate: step 1/5. The chain is Pantothenate kinase from Listeria monocytogenes serotype 4a (strain HCC23).